We begin with the raw amino-acid sequence, 131 residues long: C-C motif chemokine 21 (131 aa).

Positions Met1–Gly23 are cleaved as a signal peptide. Intrachain disulfides connect Cys31–Cys57, Cys32–Cys75, and Cys103–Cys119. The disordered stretch occupies residues His89 to Pro131.

This sequence belongs to the intercrine beta (chemokine CC) family. As to quaternary structure, monomer. Binds to CCR7. Interacts with PDPN; relocalizes PDPN to the basolateral membrane. Interacts with TNFAIP6 (via Link domain). Interacts with GPR174.

It is found in the secreted. In terms of biological role, inhibits hemopoiesis and stimulates chemotaxis. Chemotactic in vitro for thymocytes and activated T-cells, but not for B-cells, macrophages, or neutrophils. Shows preferential activity towards naive T-cells. May play a role in mediating homing of lymphocytes to secondary lymphoid organs. Binds to atypical chemokine receptor ACKR4 and mediates the recruitment of beta-arrestin (ARRB1/2) to ACKR4. This is C-C motif chemokine 21 (CCL21) from Macaca mulatta (Rhesus macaque).